A 410-amino-acid chain; its full sequence is Scarecrow-like protein 32 (410 aa).

Residues 18-408 form the GRAS domain; the sequence is LRGCGDANFM…HSVVFATVWV (391 aa). The leucine repeat I (LRI) stretch occupies residues 25–88; that stretch reads NFMEQLLLHC…AVSKTPTLSS (64 aa). The VHIID stretch occupies residues 107 to 188; the sequence is LAAFVDLTPW…HFPPFINISY (82 aa). Residues 138–142 carry the VHIID motif; that stretch reads VHIVD. The segment at 190–227 is leucine repeat II (LRII); it reads ELGSKLVNFATTRNITMEFTIVPSTYSDGFSSLLQQLR. Residues 237 to 329 are PFYRE; sequence LVVNCHMMLR…EAEISWKIEN (93 aa). The SAW stretch occupies residues 332–408; the sequence is AKEGAERVER…HSVVFATVWV (77 aa).

Belongs to the GRAS family. Expressed in seedlings, leaves and flowers.

The protein resides in the nucleus. In terms of biological role, probable transcription factor involved in plant development. The protein is Scarecrow-like protein 32 (SCL32) of Arabidopsis thaliana (Mouse-ear cress).